An 82-amino-acid chain; its full sequence is Small ribosomal subunit protein bS20 (82 aa).

The protein belongs to the bacterial ribosomal protein bS20 family.

In terms of biological role, binds directly to 16S ribosomal RNA. In Streptococcus suis (strain 98HAH33), this protein is Small ribosomal subunit protein bS20.